Reading from the N-terminus, the 142-residue chain is Large ribosomal subunit protein uL13 (142 aa).

It belongs to the universal ribosomal protein uL13 family. As to quaternary structure, part of the 50S ribosomal subunit.

Its function is as follows. This protein is one of the early assembly proteins of the 50S ribosomal subunit, although it is not seen to bind rRNA by itself. It is important during the early stages of 50S assembly. This Bordetella bronchiseptica (strain ATCC BAA-588 / NCTC 13252 / RB50) (Alcaligenes bronchisepticus) protein is Large ribosomal subunit protein uL13.